The primary structure comprises 331 residues: Cytosolic Fe-S cluster assembly factor CFD1 (331 aa).

ATP is bound at residue 25–32 (GKGGVGKS). 2 residues coordinate [4Fe-4S] cluster: cysteine 211 and cysteine 214.

Belongs to the Mrp/NBP35 ATP-binding proteins family. NUBP2/CFD1 subfamily. As to quaternary structure, heterotetramer of 2 NBP35 and 2 CFD1 chains. [4Fe-4S] cluster serves as cofactor.

The protein localises to the cytoplasm. In terms of biological role, component of the cytosolic iron-sulfur (Fe/S) protein assembly (CIA) machinery. Required for maturation of extramitochondrial Fe-S proteins. The NBP35-CFD1 heterotetramer forms a Fe-S scaffold complex, mediating the de novo assembly of an Fe-S cluster and its transfer to target apoproteins. In Cryptococcus neoformans var. neoformans serotype D (strain B-3501A) (Filobasidiella neoformans), this protein is Cytosolic Fe-S cluster assembly factor CFD1.